A 134-amino-acid polypeptide reads, in one-letter code: Large ribosomal subunit protein bL20 (134 aa).

The protein belongs to the bacterial ribosomal protein bL20 family.

In terms of biological role, binds directly to 23S ribosomal RNA and is necessary for the in vitro assembly process of the 50S ribosomal subunit. It is not involved in the protein synthesizing functions of that subunit. This is Large ribosomal subunit protein bL20 from Allorhizobium ampelinum (strain ATCC BAA-846 / DSM 112012 / S4) (Agrobacterium vitis (strain S4)).